The following is a 186-amino-acid chain: ATP synthase subunit delta (186 aa).

Belongs to the ATPase delta chain family. As to quaternary structure, F-type ATPases have 2 components, F(1) - the catalytic core - and F(0) - the membrane proton channel. F(1) has five subunits: alpha(3), beta(3), gamma(1), delta(1), epsilon(1). F(0) has three main subunits: a(1), b(2) and c(10-14). The alpha and beta chains form an alternating ring which encloses part of the gamma chain. F(1) is attached to F(0) by a central stalk formed by the gamma and epsilon chains, while a peripheral stalk is formed by the delta and b chains.

Its subcellular location is the cell inner membrane. F(1)F(0) ATP synthase produces ATP from ADP in the presence of a proton or sodium gradient. F-type ATPases consist of two structural domains, F(1) containing the extramembraneous catalytic core and F(0) containing the membrane proton channel, linked together by a central stalk and a peripheral stalk. During catalysis, ATP synthesis in the catalytic domain of F(1) is coupled via a rotary mechanism of the central stalk subunits to proton translocation. Functionally, this protein is part of the stalk that links CF(0) to CF(1). It either transmits conformational changes from CF(0) to CF(1) or is implicated in proton conduction. The polypeptide is ATP synthase subunit delta (Chelativorans sp. (strain BNC1)).